Consider the following 500-residue polypeptide: Probable cytosol aminopeptidase (500 aa).

Residues Lys-267 and Asp-272 each coordinate Mn(2+). The active site involves Lys-279. Asp-290, Asp-349, and Glu-351 together coordinate Mn(2+). The active site involves Arg-353.

The protein belongs to the peptidase M17 family. Requires Mn(2+) as cofactor.

Its subcellular location is the cytoplasm. It carries out the reaction Release of an N-terminal amino acid, Xaa-|-Yaa-, in which Xaa is preferably Leu, but may be other amino acids including Pro although not Arg or Lys, and Yaa may be Pro. Amino acid amides and methyl esters are also readily hydrolyzed, but rates on arylamides are exceedingly low.. It catalyses the reaction Release of an N-terminal amino acid, preferentially leucine, but not glutamic or aspartic acids.. Functionally, presumably involved in the processing and regular turnover of intracellular proteins. Catalyzes the removal of unsubstituted N-terminal amino acids from various peptides. The protein is Probable cytosol aminopeptidase of Tolumonas auensis (strain DSM 9187 / NBRC 110442 / TA 4).